We begin with the raw amino-acid sequence, 430 residues long: DD-carboxypeptidase/endopeptidase Mpg (430 aa).

Zn(2+)-binding residues include H295, D299, and H375.

Belongs to the peptidase M23B family. In terms of assembly, monomer. The cofactor is Zn(2+). In terms of processing, likely to be synthesized as a proenzyme. The cleavage of the N-terminal domain is probably required for the activation of the enzyme.

It is found in the cell outer membrane. Its activity is regulated as follows. Peptidoglycan (PG) degradation activity is completely inhibited by zinc chelating EDTA and phenanthroline. Functionally, has both endopeptidase and DD-carboxypeptidase activities. Degrades cell wall peptidoglycan (PG) to allow consummate expression of pili. Degrades N.gonorrhoeae and E.coli PG side chains in vitro. Required for proper piliation, which in turn is required for normal colony morphology, resistance to H(2)O(2) damage and defense against killing by human polymorphonuclear leukocytes (PMNs). Involved in type IV pilus biogenesis. Involved in resistance against non-oxidative killing by adherent CXCL8/IL8-primed human PMNs. Protects from killing by PMN-produced antimicrobial factors, which kill by a mechanism completely independent of reactive oxygen species (ROS) production of the PMNs. Provides protection against oxidative damage caused by peroxides H(2)O(2) and cumene hydroperoxide in vitro. The chain is DD-carboxypeptidase/endopeptidase Mpg from Neisseria gonorrhoeae (strain ATCC 700825 / FA 1090).